The primary structure comprises 71 residues: MPKQLKEIKDFLLTARRKDAKSVRIKKNPDNVTKFKVRCSKYLYTIVVKEKEKAEKLKQSLPPGLQVKELK.

Belongs to the eukaryotic ribosomal protein eL38 family.

This is Large ribosomal subunit protein eL38 (RpL38) from Argas monolakensis (Mono lake bird tick).